The chain runs to 185 residues: Ion-translocating oxidoreductase complex subunit B (185 aa).

The segment at M1 to A26 is hydrophobic. The 59-residue stretch at E32 to V90 folds into the 4Fe-4S domain. Residues C49, C52, C57, C73, C115, C118, C121, C125, C145, C148, C151, and C155 each coordinate [4Fe-4S] cluster. 2 4Fe-4S ferredoxin-type domains span residues R106 to K135 and L136 to L165.

This sequence belongs to the 4Fe4S bacterial-type ferredoxin family. RnfB subfamily. The complex is composed of six subunits: RnfA, RnfB, RnfC, RnfD, RnfE and RnfG. [4Fe-4S] cluster is required as a cofactor.

It localises to the cell inner membrane. Functionally, part of a membrane-bound complex that couples electron transfer with translocation of ions across the membrane. The polypeptide is Ion-translocating oxidoreductase complex subunit B (Tolumonas auensis (strain DSM 9187 / NBRC 110442 / TA 4)).